A 328-amino-acid polypeptide reads, in one-letter code: Nickel import system permease protein NikB (328 aa).

Transmembrane regions (helical) follow at residues 11–31 (LMQM…LMKL), 104–124 (LLIS…LGII), 139–159 (VIST…LLFI), 170–190 (ILSQ…AYII), 229–249 (ILPI…GTVV), and 279–299 (VLFI…LTLL). Positions 100 to 297 (APITLLISFS…IINTIADLLT (198 aa)) constitute an ABC transmembrane type-1 domain.

The protein belongs to the binding-protein-dependent transport system permease family. OppBC subfamily. The complex is composed of two ATP-binding proteins (NikD and NikE), two transmembrane proteins (NikB and NikC) and a solute-binding protein (NikA).

It localises to the cell membrane. Functionally, part of the ABC transporter complex NikABCDE (Opp2) involved in nickel import. Probably responsible for the translocation of the substrate across the membrane. This is Nickel import system permease protein NikB from Staphylococcus aureus (strain MSSA476).